A 166-amino-acid chain; its full sequence is uncharacterized protein (166 aa).

This is an uncharacterized protein from Saccharomyces cerevisiae (strain ATCC 204508 / S288c) (Baker's yeast).